A 1000-amino-acid polypeptide reads, in one-letter code: Probable coatomer subunit beta' (1000 aa).

WD repeat units lie at residues 13–52 (ARSD…LVKS), 55–94 (VCDV…RVHQ), 97–136 (AHSD…AMKQ), 140–180 (GHTH…PNFT), 183–224 (GHEK…CVQT), 227–266 (GHAQ…LETT), and 351–391 (LGSS…NKDF). A disordered region spans residues 863 to 1000 (PRQTETQLKA…MDDLNLDEED (138 aa)). Positions 901–915 (EPEEEEEQEEFDDDQ) are enriched in acidic residues. Over residues 960 to 969 (SASSQQSAQD) the composition is skewed to low complexity. The span at 970-1000 (FQDDTQWSDEDFGDAENGDLNMDDLNLDEED) shows a compositional bias: acidic residues.

The protein belongs to the WD repeat COPB2 family. Oligomeric complex that consists of at least the alpha, beta, beta', gamma, delta, epsilon and zeta subunits.

The protein localises to the cytoplasm. It is found in the golgi apparatus membrane. Its subcellular location is the cytoplasmic vesicle. It localises to the COPI-coated vesicle membrane. In terms of biological role, the coatomer is a cytosolic protein complex that binds to dilysine motifs and reversibly associates with Golgi non-clathrin-coated vesicles, which further mediate biosynthetic protein transport from the ER, via the Golgi up to the trans Golgi network. Coatomer complex is required for budding from Golgi membranes, and is essential for the retrograde Golgi-to-ER transport of dilysine-tagged proteins. In Caenorhabditis elegans, this protein is Probable coatomer subunit beta' (copb-2).